Consider the following 209-residue polypeptide: Thymidine kinase (209 aa).

ATP is bound by residues 16–23 (GPMFAGKT) and 90–93 (DEAQ). The active-site Proton acceptor is the Glu91.

Belongs to the thymidine kinase family. In terms of assembly, homotetramer.

It localises to the cytoplasm. It carries out the reaction thymidine + ATP = dTMP + ADP + H(+). The polypeptide is Thymidine kinase (Onion yellows phytoplasma (strain OY-M)).